Here is a 609-residue protein sequence, read N- to C-terminus: Membrane protein insertase YidC (609 aa).

5 consecutive transmembrane segments (helical) span residues 8 to 28, 381 to 401, 451 to 471, 509 to 529, and 545 to 565; these read LILATALSFLVILVWFILFPP, MGWSIIGLTLIIKAIVFPLAL, LPILLQIPIFFSLYKVIFVTI, SLTATILIGILPLLLGISMWL, and IFAWMPWVFMFMLGSFASGLV.

The protein belongs to the OXA1/ALB3/YidC family. Type 1 subfamily. In terms of assembly, interacts with the Sec translocase complex via SecD. Specifically interacts with transmembrane segments of nascent integral membrane proteins during membrane integration.

Its subcellular location is the cell inner membrane. Its function is as follows. Required for the insertion and/or proper folding and/or complex formation of integral membrane proteins into the membrane. Involved in integration of membrane proteins that insert both dependently and independently of the Sec translocase complex, as well as at least some lipoproteins. Aids folding of multispanning membrane proteins. This Ruegeria pomeroyi (strain ATCC 700808 / DSM 15171 / DSS-3) (Silicibacter pomeroyi) protein is Membrane protein insertase YidC.